Here is a 240-residue protein sequence, read N- to C-terminus: MTERYFVTGTDTEVGKTVASCALLQAAAQAGWQTAGYKPVASGSEMTPEGLRNSDALALQHNSTLALRYEAVNPYTFAEPTSPHIVSAALGQPIEAETLSAGLRMLEAQAEWVLVEGAGGWFTPLSETLTFADWATQEQLPVILVVGVKLGCINHAVLTAQAVQQAGLRLAGWVANDVVPPGQRHTEYLATLKRMLPAPFLGEIPWLENVAPESDIGHWLDLSALGSASSTGKAADRPAV.

ATP is bound at residue 13–18 (EVGKTV). T17 lines the Mg(2+) pocket. Residue K38 is part of the active site. Position 42 (S42) interacts with substrate. ATP is bound by residues D55, 116–119 (EGAG), 176–177 (ND), and 205–207 (PWL). Mg(2+) contacts are provided by D55 and E116.

It belongs to the dethiobiotin synthetase family. As to quaternary structure, homodimer. It depends on Mg(2+) as a cofactor.

It is found in the cytoplasm. The catalysed reaction is (7R,8S)-7,8-diammoniononanoate + CO2 + ATP = (4R,5S)-dethiobiotin + ADP + phosphate + 3 H(+). Its pathway is cofactor biosynthesis; biotin biosynthesis; biotin from 7,8-diaminononanoate: step 1/2. Catalyzes a mechanistically unusual reaction, the ATP-dependent insertion of CO2 between the N7 and N8 nitrogen atoms of 7,8-diaminopelargonic acid (DAPA, also called 7,8-diammoniononanoate) to form a ureido ring. The polypeptide is ATP-dependent dethiobiotin synthetase BioD (Pseudescherichia vulneris (Escherichia vulneris)).